Reading from the N-terminus, the 299-residue chain is uncharacterized protein (299 aa).

Active-site charge relay system residues include T47 and Y109. Y138 functions as the Proton donor in the catalytic mechanism. Catalysis depends on K168, which acts as the Schiff-base intermediate with substrate.

The protein belongs to the DapA family. Homotetramer.

It localises to the cytoplasm. This is an uncharacterized protein from Chloroflexus aurantiacus (strain ATCC 29366 / DSM 635 / J-10-fl).